Consider the following 589-residue polypeptide: Probable translation initiation factor IF-2 (589 aa).

The tr-type G domain maps to 3–224; that stretch reads VRSPFVVVMG…AGVSQRFIPR (222 aa). Residues 12–19 form a G1 region; sequence GHVDVGKT. 12–19 contacts GTP; that stretch reads GHVDVGKT. Positions 37–41 are G2; it reads MITQH. The segment at 78–81 is G3; sequence DTPG. GTP contacts are provided by residues 78–82 and 132–135; these read DTPGH and NKLD. The interval 132-135 is G4; that stretch reads NKLD. The segment at 200-202 is G5; sequence SAV.

It belongs to the TRAFAC class translation factor GTPase superfamily. Classic translation factor GTPase family. IF-2 subfamily.

Function in general translation initiation by promoting the binding of the formylmethionine-tRNA to ribosomes. Seems to function along with eIF-2. This Pyrobaculum neutrophilum (strain DSM 2338 / JCM 9278 / NBRC 100436 / V24Sta) (Thermoproteus neutrophilus) protein is Probable translation initiation factor IF-2.